The chain runs to 38 residues: Large ribosomal subunit protein bL36 (38 aa).

Belongs to the bacterial ribosomal protein bL36 family.

The polypeptide is Large ribosomal subunit protein bL36 (Synechococcus sp. (strain JA-2-3B'a(2-13)) (Cyanobacteria bacterium Yellowstone B-Prime)).